The following is a 353-amino-acid chain: Putative transport protein YrrI (353 aa).

8 helical membrane passes run 8 to 28 (LLLWVAICLLVLLTVYVFFML), 37 to 57 (LVIKTIFIPLIISIFISYLLL), 77 to 97 (IYVLFFGGIGWALYKGVPVLI), 165 to 185 (FLIAATIPFLVFYMVKDIELM), 220 to 240 (LLVCLILGVIAGISFWVFGLP), 243 to 263 (LILGLISGVTNVIPYFGPFIG), 269 to 289 (LIAMTISVKAVLVVVITVFIL), and 311 to 331 (VVIMLALLAGGELAGIVGMIL).

This sequence belongs to the autoinducer-2 exporter (AI-2E) (TC 2.A.86) family.

It localises to the cell membrane. The protein is Putative transport protein YrrI (yrrI) of Bacillus subtilis (strain 168).